We begin with the raw amino-acid sequence, 69 residues long: Large ribosomal subunit protein bL28 (69 aa).

The protein belongs to the bacterial ribosomal protein bL28 family.

This Lawsonia intracellularis (strain PHE/MN1-00) protein is Large ribosomal subunit protein bL28.